We begin with the raw amino-acid sequence, 130 residues long: Small ribosomal subunit protein uS8 (130 aa).

It belongs to the universal ribosomal protein uS8 family. As to quaternary structure, part of the 30S ribosomal subunit. Contacts proteins S5 and S12.

Its function is as follows. One of the primary rRNA binding proteins, it binds directly to 16S rRNA central domain where it helps coordinate assembly of the platform of the 30S subunit. The chain is Small ribosomal subunit protein uS8 from Salmonella arizonae (strain ATCC BAA-731 / CDC346-86 / RSK2980).